Here is a 537-residue protein sequence, read N- to C-terminus: Tyrosine-protein kinase Fyn (537 aa).

Residue Gly-2 is the site of N-myristoyl glycine attachment. 2 S-palmitoyl cysteine lipidation sites follow: Cys-3 and Cys-6. Thr-12 carries the phosphothreonine; by PKC modification. Residues 82-143 enclose the SH3 domain; sequence TGVTLFVALY…PSNYVAPVDS (62 aa). One can recognise an SH2 domain in the interval 149–246; that stretch reads WYFGKLGRKD…GLCCRLVVPC (98 aa). Residues 271–524 enclose the Protein kinase domain; it reads LQLIKRLGNG…YLQGFLEDYF (254 aa). ATP is bound by residues 277 to 285 and Lys-299; that span reads LGNGQFGEV. Asp-390 acts as the Proton acceptor in catalysis. Tyr-420 bears the Phosphotyrosine; by autocatalysis mark. Tyr-531 is subject to Phosphotyrosine.

It belongs to the protein kinase superfamily. Tyr protein kinase family. SRC subfamily. In terms of assembly, associates through its SH3 domain, to the p85 subunit of phosphatidylinositol 3-kinase. It depends on Mn(2+) as a cofactor.

It carries out the reaction L-tyrosyl-[protein] + ATP = O-phospho-L-tyrosyl-[protein] + ADP + H(+). Inhibited by phosphorylation of Tyr-531 by leukocyte common antigen and activated by dephosphorylation of this site. In terms of biological role, tyrosine-protein kinase implicated in the control of cell growth. Plays a role in the regulation of intracellular calcium levels. Required in brain development and mature brain function with important roles in the regulation of axon growth, axon guidance, and neurite extension. Blocks axon outgrowth and attraction induced by ntn1 by phosphorylating its receptor ddc. In Xenopus laevis (African clawed frog), this protein is Tyrosine-protein kinase Fyn (fyn).